The primary structure comprises 156 residues: Small ribosomal subunit protein uS7 (156 aa).

It belongs to the universal ribosomal protein uS7 family. In terms of assembly, part of the 30S ribosomal subunit. Contacts proteins S9 and S11.

Its function is as follows. One of the primary rRNA binding proteins, it binds directly to 16S rRNA where it nucleates assembly of the head domain of the 30S subunit. Is located at the subunit interface close to the decoding center, probably blocks exit of the E-site tRNA. The chain is Small ribosomal subunit protein uS7 from Oceanobacillus iheyensis (strain DSM 14371 / CIP 107618 / JCM 11309 / KCTC 3954 / HTE831).